The primary structure comprises 560 residues: Zinc finger protein 619 (560 aa).

C2H2-type zinc fingers lie at residues 188–210 (YKCGECGSYYNPHSDFHLHQRVH), 216–238 (YTCKECGKTFRYNSKLSRHQKIH), 244–266 (YSCEECGQAFSQNSHLLQHQKLH), 272–294 (YECTDCGKTFSYNSKLIRHQRIH), 300–322 (FKCKECGKAFSCSYDCIIHERIH), 328–350 (YECKECGKSLSSNSVLIQHQRIH), 356–378 (YECKECGKAFHRSSVFLQHQRFH), 384–406 (YKCNECWKTFSCSSRFIVHQRIH), 412–434 (YECQECGKTFSQKITLVQHQRVH), and 440–462 (YECKECGKAFRWNASFIQHQKWH).

This sequence belongs to the krueppel C2H2-type zinc-finger protein family.

The protein localises to the nucleus. Functionally, may be involved in transcriptional regulation. The protein is Zinc finger protein 619 (ZNF619) of Homo sapiens (Human).